We begin with the raw amino-acid sequence, 261 residues long: Imidazole glycerol phosphate synthase subunit HisF (261 aa).

Active-site residues include D16 and D135.

It belongs to the HisA/HisF family. As to quaternary structure, heterodimer of HisH and HisF.

It is found in the cytoplasm. The enzyme catalyses 5-[(5-phospho-1-deoxy-D-ribulos-1-ylimino)methylamino]-1-(5-phospho-beta-D-ribosyl)imidazole-4-carboxamide + L-glutamine = D-erythro-1-(imidazol-4-yl)glycerol 3-phosphate + 5-amino-1-(5-phospho-beta-D-ribosyl)imidazole-4-carboxamide + L-glutamate + H(+). It functions in the pathway amino-acid biosynthesis; L-histidine biosynthesis; L-histidine from 5-phospho-alpha-D-ribose 1-diphosphate: step 5/9. In terms of biological role, IGPS catalyzes the conversion of PRFAR and glutamine to IGP, AICAR and glutamate. The HisF subunit catalyzes the cyclization activity that produces IGP and AICAR from PRFAR using the ammonia provided by the HisH subunit. In Mycolicibacterium vanbaalenii (strain DSM 7251 / JCM 13017 / BCRC 16820 / KCTC 9966 / NRRL B-24157 / PYR-1) (Mycobacterium vanbaalenii), this protein is Imidazole glycerol phosphate synthase subunit HisF.